A 238-amino-acid chain; its full sequence is Small ribosomal subunit protein uS2 (238 aa).

It belongs to the universal ribosomal protein uS2 family.

In Chloroflexus aurantiacus (strain ATCC 29366 / DSM 635 / J-10-fl), this protein is Small ribosomal subunit protein uS2.